We begin with the raw amino-acid sequence, 405 residues long: Alpha-N-acetylgalactosaminidase (405 aa).

Disulfide bonds link cysteine 21-cysteine 63, cysteine 25-cysteine 32, and cysteine 111-cysteine 142. Substrate-binding positions include 61-62 (DD) and lysine 138. Aspartate 140 serves as the catalytic Nucleophile. Asparagine 161 is a glycosylation site (N-linked (GlcNAc...) asparagine). A disulfide bridge connects residues cysteine 171 and cysteine 193. Serine 172 provides a ligand contact to substrate. Asparagine 185 carries an N-linked (GlcNAc...) asparagine glycan. Positions 197 and 201 each coordinate substrate. Aspartate 201 serves as the catalytic Proton donor. An N-linked (GlcNAc...) asparagine glycan is attached at asparagine 369.

This sequence belongs to the glycosyl hydrolase 27 family. In terms of assembly, homodimer.

It is found in the lysosome. It carries out the reaction Cleavage of non-reducing alpha-(1-&gt;3)-N-acetylgalactosamine residues from human blood group A and AB mucin glycoproteins, Forssman hapten and blood group A lacto series glycolipids.. It catalyses the reaction a neolactoside IV(3)-alpha-GalNAc,IV(2)-alpha-Fuc-nLc4Cer(d18:1(4E)) + H2O = a neolactoside IV(2)-alpha-Fuc-nLc4Cer(d18:1(4E)) + N-acetyl-alpha-D-galactosamine. The catalysed reaction is a neolactoside IV(3)-alpha-GalNAc,IV(2)-alpha-Fuc-nLc4Cer(d18:0) + H2O = a neolactoside IV(2)-alpha-Fuc-nLc4Cer(d18:0) + N-acetyl-alpha-D-galactosamine. The enzyme catalyses a globoside IV3GalNAc-Gb4Cer + H2O = N-acetyl-alpha-D-galactosamine + a globoside Gb4Cer. Functionally, removes terminal alpha-N-acetylgalactosamine residues from glycolipids and glycopeptides. Required for the breakdown of glycolipids. The chain is Alpha-N-acetylgalactosaminidase (NAGA) from Gallus gallus (Chicken).